A 591-amino-acid chain; its full sequence is Negative elongation factor D (591 aa).

The interval M1–V44 is disordered. Residues D34–V44 show a composition bias toward acidic residues.

Belongs to the NELF-D family. As to quaternary structure, the NELF complex is composed of NELFA, NELFB, NELFCD and NELFE; NELFA and NELFCD form a stable subcomplex that binds primarily through NELFCD to the N-terminus of NELFB. Binds RNA which may help to stabilize the NELF complex on nucleic acid. In vitro, the NELFA:NELFCD subcomplex binds to ssDNA and ssRNA in a sequence- and structure-dependent manner. Interacts with ARAF1. Interacts with PCF11. Interacts with NELFB. Interacts with KAT8.

The protein localises to the nucleus. In terms of biological role, essential component of the NELF complex, a complex that negatively regulates the elongation of transcription by RNA polymerase II. The NELF complex, which acts via an association with the DSIF complex and causes transcriptional pausing, is counteracted by the P-TEFb kinase complex. This chain is Negative elongation factor D (Nelfcd), found in Mus musculus (Mouse).